A 146-amino-acid chain; its full sequence is Protein E6 (146 aa).

Zinc fingers lie at residues 27 to 63 (CVFC…CAPC) and 100 to 136 (CHAC…CCQC).

Belongs to the papillomaviridae E6 protein family. In terms of assembly, forms homodimers. Interacts with ubiquitin-protein ligase UBE3A/E6-AP; this interaction stimulates UBE3A ubiquitin activity. Interacts with host TP53 and EP300; this interaction inhibits TP53 activity.

The protein localises to the host cytoplasm. It localises to the host nucleus. Functionally, plays a major role in the induction and maintenance of cellular transformation. E6 associates with host UBE3A/E6-AP ubiquitin-protein ligase and modulates its activity. Sequesters tumor suppressor TP53 in the host cytoplasm and modulates its activity by interacting with host EP300 that results in the reduction of TP53 acetylation and activation. In turn, apoptosis induced by DNA damage is inhibited. E6 also protects host keratinocytes from apoptosis by mediating the degradation of host BAK1. May also inhibit host immune response. This is Protein E6 from Human papillomavirus type 61.